A 517-amino-acid polypeptide reads, in one-letter code: Amidophosphoribosyltransferase (517 aa).

Met1 bears the N-acetylmethionine mark. Residues 1–11 constitute a propeptide that is removed on maturation; that stretch reads MELEELGIREE. Cys12 (nucleophile) is an active-site residue. The Glutamine amidotransferase type-2 domain maps to 12-261; sequence CGVFGCIASG…PGEIVEISRH (250 aa). Cys280 contacts [4Fe-4S] cluster. Mg(2+) contacts are provided by Ser327, Asp389, and Asp390. Residues Cys426, Cys503, and Cys506 each contribute to the [4Fe-4S] cluster site.

This sequence in the C-terminal section; belongs to the purine/pyrimidine phosphoribosyltransferase family. As to quaternary structure, homotetramer. Mg(2+) is required as a cofactor. [4Fe-4S] cluster serves as cofactor.

It carries out the reaction 5-phospho-beta-D-ribosylamine + L-glutamate + diphosphate = 5-phospho-alpha-D-ribose 1-diphosphate + L-glutamine + H2O. Its pathway is purine metabolism; IMP biosynthesis via de novo pathway; N(1)-(5-phospho-D-ribosyl)glycinamide from 5-phospho-alpha-D-ribose 1-diphosphate: step 1/2. Its function is as follows. Catalyzes the formation of phosphoribosylamine from phosphoribosylpyrophosphate (PRPP) and glutamine. The polypeptide is Amidophosphoribosyltransferase (Mus musculus (Mouse)).